Consider the following 1434-residue polypeptide: Probable ATP-dependent RNA helicase spindle-E (1434 aa).

Residues 125 to 292 (LAAINAHPVI…FATTNSIPPV (168 aa)) enclose the Helicase ATP-binding domain. 138-145 (GETGCGKT) is an ATP binding site. Positions 238 to 241 (DEVH) match the DEAH box motif. Positions 339 to 526 (KIIVIIDNME…NSVLKAKVLN (188 aa)) constitute a Helicase C-terminal domain. Residues 938-1001 (AGDITKGMMV…RLMPRELTEQ (64 aa)) enclose the Tudor domain.

The protein belongs to the DEAD box helicase family. DEAH subfamily.

Its subcellular location is the cytoplasm. It carries out the reaction ATP + H2O = ADP + phosphate + H(+). In terms of biological role, probable ATP-binding RNA helicase which plays a central role during spermatogenesis and oogenesis by repressing transposable elements and preventing their mobilization, which is essential for the germline integrity. Acts via the piRNA metabolic process, which mediates the repression of transposable elements during meiosis by forming complexes composed of piRNAs and Piwi and govern the methylation and subsequent repression of transposons. Involved in the repression of LTR retrotransposon copia. Also involved in telomere regulation by repressing specialized telomeric retroelements HeT-A, TAHRE, and TART; Drosophila telomeres being maintained by transposition of specialized telomeric retroelements. Involved in telomeric trans-silencing, a repression mechanism by which a transposon or a transgene inserted in subtelomeric heterochromatin has the capacity to repress in trans in the female germline, a homologous transposon, or transgene located in euchromatin. Involved in the repression of testis-expressed Stellate genes by the homologous Su(Ste) repeats. Required for anteroposterior and dorsoventral axis formation during oogenesis. The polypeptide is Probable ATP-dependent RNA helicase spindle-E (spn-E) (Drosophila sechellia (Fruit fly)).